A 595-amino-acid polypeptide reads, in one-letter code: S-(+)-linalool synthase, chloroplastic (595 aa).

A chloroplast-targeting transit peptide spans 1-46 (MVCHVFSSFSSSLIRVLEAPLLLPAASASSSSSSSPASRSGGRRRR). The span at 27-40 (SASSSSSSSPASRS) shows a compositional bias: low complexity. The interval 27–54 (SASSSSSSSPASRSGGRRRRAAHVRPSP) is disordered. (2E)-geranyl diphosphate is bound by residues R309, D346, D350, R487, and D490. Mg(2+) is bound by residues D346 and D350. Residues 346–350 (DDIFD) carry the DDXXD motif motif. 3 residues coordinate Mg(2+): D490, S494, and E498.

It belongs to the terpene synthase family. Tpsb subfamily. It depends on Mg(2+) as a cofactor. Mn(2+) serves as cofactor.

It localises to the plastid. The protein localises to the chloroplast. It catalyses the reaction (2E)-geranyl diphosphate + H2O = (S)-linalool + diphosphate. Its pathway is secondary metabolite biosynthesis; terpenoid biosynthesis. Its function is as follows. Involved in monoterpene (C10) biosynthesis. The major product is S-(+)-linalool. Linalool production is induced by jasmonate in response to pathogen attack, it possesses antibacterial activity and is important for resistance to the bacterial blight pathogen Xanthomonas oryzae pv. oryzae (Xoo). Plants over-expressing linalool synthase display enhanced resistance to Xoo. This chain is S-(+)-linalool synthase, chloroplastic, found in Oryza sativa subsp. japonica (Rice).